The chain runs to 475 residues: Sensor histidine kinase QseE (475 aa).

Residues 1–13 are Cytoplasmic-facing; sequence MKRWPVFPRSLRQ. The helical transmembrane segment at 14 to 34 threads the bilayer; it reads LVMLAFLLILLPLLVLAWQAW. Topologically, residues 35-173 are periplasmic; the sequence is QSLNALSDQA…LQREIAERGQ (139 aa). A helical membrane pass occupies residues 174–194; it reads YFGWQSLVLFLVSLVMVLLFT. At 195 to 475 the chain is on the cytoplasmic side; the sequence is RMIIGPVKNI…IELPSSKNTK (281 aa). Residues 256-472 enclose the Histidine kinase domain; that stretch reads HLSHELKTPL…CFRIELPSSK (217 aa). Residue His-259 is modified to Phosphohistidine; by autocatalysis.

Post-translationally, autophosphorylated.

The protein localises to the cell inner membrane. It carries out the reaction ATP + protein L-histidine = ADP + protein N-phospho-L-histidine.. Its function is as follows. Member of the two-component regulatory system QseF/QseE involved in the regulation of virulence and metabolism in EHEC. Required for pedestal formation in host epithelial cells during infection. Autophosphorylates in response to epinephrine, sulfate or phosphate and then probably transfers its phosphate group to QseF. The chain is Sensor histidine kinase QseE (qseE) from Escherichia coli O157:H7.